The sequence spans 148 residues: SsrA-binding protein (148 aa).

It belongs to the SmpB family.

Its subcellular location is the cytoplasm. In terms of biological role, required for rescue of stalled ribosomes mediated by trans-translation. Binds to transfer-messenger RNA (tmRNA), required for stable association of tmRNA with ribosomes. tmRNA and SmpB together mimic tRNA shape, replacing the anticodon stem-loop with SmpB. tmRNA is encoded by the ssrA gene; the 2 termini fold to resemble tRNA(Ala) and it encodes a 'tag peptide', a short internal open reading frame. During trans-translation Ala-aminoacylated tmRNA acts like a tRNA, entering the A-site of stalled ribosomes, displacing the stalled mRNA. The ribosome then switches to translate the ORF on the tmRNA; the nascent peptide is terminated with the 'tag peptide' encoded by the tmRNA and targeted for degradation. The ribosome is freed to recommence translation, which seems to be the essential function of trans-translation. The polypeptide is SsrA-binding protein (Pseudothermotoga lettingae (strain ATCC BAA-301 / DSM 14385 / NBRC 107922 / TMO) (Thermotoga lettingae)).